Here is a 2766-residue protein sequence, read N- to C-terminus: Thyroglobulin (2766 aa).

The first 20 residues, 1–20 (MTALVLWVSTLLSSVCLVAA), serve as a signal peptide directing secretion. Tyr25 bears the Iodotyrosine; alternate mark. Residue Tyr25 is modified to Sulfotyrosine; alternate. Tyr25 bears the Thyroxine; alternate mark. Tyr25 bears the Triiodothyronine; alternate mark. 4 consecutive Thyroglobulin type-1 domains span residues 32–93 (LRPC…PTVC), 94–161 (LSFC…PTRC), 162–298 (PRSC…RFRC), and 299–359 (PTKC…PPSC). Intrachain disulfides connect Cys35-Cys53, Cys64-Cys71, Cys73-Cys93, Cys97-Cys121, Cys132-Cys139, Cys141-Cys161, Cys165-Cys184, and Cys195-Cys236. At Tyr109 the chain carries Iodotyrosine. An N-linked (GlcNAc...) asparagine glycan is attached at Asn111. An Iodotyrosine; alternate modification is found at Tyr150. Tyr150 bears the Diiodotyrosine; alternate mark. N-linked (GlcNAc...) asparagine glycosylation is present at Asn199. An iodotyrosine mark is found at Tyr235 and Tyr259. Disulfide bonds link Cys302-Cys320, Cys331-Cys337, Cys339-Cys359, Cys365-Cys620, Cys408-Cys608, Cys631-Cys636, Cys638-Cys658, Cys662-Cys687, and Cys698-Cys703. N-linked (GlcNAc...) asparagine glycans are attached at residues Asn484 and Asn496. 6 Thyroglobulin type-1 domains span residues 605-658 (AQAC…RPRC), 659-726 (PTKC…AKQC), 727-922 (PSVC…IPAC), 923-1074 (PGPC…MPQC), 1075-1146 (PTNC…SAQC), and 1147-1211 (PGLC…QPAC). Tyr704 carries the post-translational modification Iodotyrosine; alternate. At Tyr704 the chain carries Thyroxine; alternate. A Triiodothyronine; alternate modification is found at Tyr704. At Tyr704 the chain carries Diiodotyrosine; alternate. Cystine bridges form between Cys705/Cys726, Cys730/Cys763, Cys774/Cys899, Cys901/Cys922, Cys926/Cys1032, Cys1043/Cys1050, Cys1052/Cys1074, Cys1078/Cys1109, Cys1127/Cys1146, Cys1150/Cys1170, Cys1182/Cys1189, Cys1191/Cys1211, Cys1216/Cys1265, Cys1232/Cys1246, Cys1306/Cys1356, and Cys1331/Cys1347. The N-linked (GlcNAc...) asparagine glycan is linked to Asn748. At Tyr785 the chain carries Iodotyrosine. N-linked (GlcNAc...) asparagine glycosylation is present at Asn817. Tyr867 bears the Iodotyrosine; alternate mark. Tyr867 is subject to Diiodotyrosine; alternate. Diiodotyrosine is present on Tyr884. The N-linked (GlcNAc...) asparagine glycan is linked to Asn948. An Iodotyrosine; alternate modification is found at Tyr993. Tyr993 is subject to Diiodotyrosine; alternate. N-linked (GlcNAc...) asparagine glycosylation is present at Asn1141. An Iodotyrosine modification is found at Tyr1310. Thyroxine is present on Tyr1310. 2 N-linked (GlcNAc...) asparagine glycosylation sites follow: Asn1349 and Asn1365. Intrachain disulfides connect Cys1441–Cys1458, Cys1461–Cys1472, Cys1475–Cys1489, Cys1492–Cys1509, Cys1513–Cys1522, Cys1542–Cys1564, Cys1602–Cys1626, Cys1606–Cys1612, and Cys1638–Cys1661. Type II repeat units lie at residues 1455–1468 (ALGCVKCPEGSFSQ), 1469–1485 (DGRCTPCPAGTYQEQAG), and 1486–1502 (SSACIPCPRGRTTITTG). Residues 1510–1564 (VTDCQKNEAGLQCDQNGQYQASQKNRDSGEVFCVDSEGRKLQWLQTEAGLSESQC) form the Thyroglobulin type-1 11 domain. The Type IIIA repeat unit spans residues 1602-1722 (CLTDCANDEA…GANLTDTHTY (121 aa)). 4 N-linked (GlcNAc...) asparagine glycosylation sites follow: Asn1715, Asn1729, Asn1773, and Asn1864. 4 disulfide bridges follow: Cys1723/Cys1748, Cys1727/Cys1733, Cys1732/Cys1834, and Cys1759/Cys1776. The stretch at 1723 to 1889 (CLLACDNDSC…LFSAEQANLW (167 aa)) is one Type IIIB repeat. Intrachain disulfides connect Cys1890/Cys1916, Cys1894/Cys1901, Cys1925/Cys1936, Cys1993/Cys2021, Cys1997/Cys2003, Cys2002/Cys2073, and Cys2032/Cys2045. One copy of the Type IIIA repeat lies at 1890-1992 (CLSRCAQEPI…GKLISNGFFE (103 aa)). N-linked (GlcNAc...) asparagine glycosylation occurs at Asn1935. The stretch at 1993–2125 (CERLCDRDPC…AATSNFSMAQ (133 aa)) is one Type IIIB repeat. Residue Asn2010 is glycosylated (N-linked (GlcNAc...) asparagine). Asn2120 is a glycosylation site (N-linked (GlcNAc...) asparagine). The stretch at 2126-2183 (DFCLQQCSRHQDCLVTTLQIQPGVVRCVFYPDIQNCIHSLRSHTCWLLLHEEATYIYR) is one Type IIIA repeat. Disulfide bonds link Cys2128–Cys2152, Cys2132–Cys2138, and Cys2161–Cys2170. Position 2182 is an iodotyrosine (Tyr2182). The segment at 2186–2766 (GIPLVQSDVT…LEPVPKSYSK (581 aa)) is cholinesterase-like (ChEL). N-linked (GlcNAc...) asparagine glycosylation is present at Asn2249. A disulfide bridge connects residues Cys2263 and Cys2280. An N-linked (GlcNAc...) asparagine glycan is attached at Asn2294. The cysteines at positions 2441 and 2452 are disulfide-linked. Tyr2539 carries the thyroxine modification. Tyr2572 carries the iodotyrosine; alternate modification. The residue at position 2572 (Tyr2572) is a Thyroxine; alternate. Tyr2572 carries the triiodothyronine; alternate modification. Tyr2572 bears the Diiodotyrosine; alternate mark. Asn2581 is a glycosylation site (N-linked (GlcNAc...) asparagine). An iodotyrosine mark is found at Tyr2586 and Tyr2616. Cys2590 and Cys2714 form a disulfide bridge. Position 2696 is a diiodotyrosine (Tyr2696). The interval 2729-2766 (GAKDAQLTKSEEEDLEVGPGLEEDLSGSLEPVPKSYSK) is disordered. Over residues 2739 to 2753 (EEEDLEVGPGLEEDL) the composition is skewed to acidic residues. Tyr2764 bears the Iodotyrosine; alternate mark. Position 2764 is a thyroxine; alternate (Tyr2764). Triiodothyronine; alternate is present on Tyr2764. Tyr2764 is subject to Diiodotyrosine; alternate.

The protein belongs to the type-B carboxylesterase/lipase family. Monomer. Homodimer (via ChEL region); occurs in the endoplasmic reticulum and is required for export to the Golgi apparatus. Homooligomer; disulfide-linked; stored in this form in the thyroid follicle lumen. Post-translationally, iodinated on tyrosine residues by TPO. There are 4 pairs of iodinated tyrosines used for coupling: acceptor Tyr-25 is coupled to donor Tyr-150 or Tyr-235, acceptor Tyr-2572 is coupled to donor Tyr-2539, acceptor Tyr-2764 in monomer 1 is coupled to donor Tyr-2764 in monomer 2 and acceptor Tyr-1310 in monomer 1 is coupled to donor Tyr-109 in monomer 2. Sulfated tyrosines are desulfated during iodination. In terms of processing, undergoes sequential proteolysis by cathepsins to release thyroxine (T4) and triiodothyronine (T3) hormones. In the thyroid follicle lumen, cross-linked TG (storage form) is solubilized by limited proteolysis mediated by cathepsins CTSB and/or CTSL. Partially cleaved TG is further processed by CTSK/cathepsin K and/or CTSL resulting in the release of T4. Following endocytosis, further processing occurs leading to the release of T3 and more T4 hormones. Specifically expressed in the thyroid gland.

Its subcellular location is the secreted. Acts as a substrate for the production of iodinated thyroid hormones thyroxine (T4) and triiodothyronine (T3). The synthesis of T3 and T4 involves iodination of selected tyrosine residues of TG/thyroglobulin followed by their oxidative coupling. Following TG re-internalization and lysosomal-mediated proteolysis, T3 and T4 are released from the polypeptide backbone leading to their secretion into the bloodstream. One dimer produces 7 thyroid hormone molecules. This Mus musculus (Mouse) protein is Thyroglobulin (Tg).